A 347-amino-acid chain; its full sequence is Bifunctional dihydroflavonol 4-reductase/flavanone 4-reductase (347 aa).

NADP(+) contacts are provided by lysine 44 and tyrosine 163.

The protein belongs to the NAD(P)-dependent epimerase/dehydratase family. Dihydroflavonol-4-reductase subfamily.

It carries out the reaction a (2R,3S,4S)-leucoanthocyanidin + NADP(+) = a (2R,3R)-dihydroflavonol + NADPH + H(+). The enzyme catalyses (2S)-flavan-4-ol + NADP(+) = (2S)-flavanone + NADPH + H(+). Bifunctional enzyme involved in the flavonoid metabolism. May use dihydroquercetin, eriodictyol, garbanzol (5-deoxydihydrokaempferol), dihydrofisetin (5-deoxydihydroquercetin), dihydrokaempferol to a low extent (5%), but not naringenin, 5-deoxynaringenin or butin (5-deoxyeriodictyol) as substrate. The polypeptide is Bifunctional dihydroflavonol 4-reductase/flavanone 4-reductase (DFR) (Pyrus communis (Pear)).